The primary structure comprises 265 residues: MESNLQGTFLLNNTPLAQFPEMKAPVCQYSVQNSFYKLSPPGLGPQLAAGTPHGITDILSRPVAAPNNSLLSGYPHVAGFGGLSSQGVYYSPQVGNFSKAGNEYPTRTRNCWADTGQDWRGGRQCSNTPDPLSDSIHKKKHTRPTFTGHQIFALEKTFEQTKYLAGPERARLAYSLGMTESQVKVWFQNRRTKWRKKSALEPSSSTPRAPGGAGAGAGGDRAPSENEDDEYNKPLDPDSDDEKIRLLLRKHRAAFSVLSLGAHSV.

The segment at residues 139 to 198 (KKHTRPTFTGHQIFALEKTFEQTKYLAGPERARLAYSLGMTESQVKVWFQNRRTKWRKKS) is a DNA-binding region (homeobox). Positions 196-240 (KKSALEPSSSTPRAPGGAGAGAGGDRAPSENEDDEYNKPLDPDSD) are disordered.

Its subcellular location is the nucleus. Its function is as follows. Putative transcription factor, which may be involved in patterning of central nervous system and pancreas. The protein is Homeobox protein Nkx-6.3 (NKX6-3) of Homo sapiens (Human).